A 1020-amino-acid polypeptide reads, in one-letter code: 5'-3' exoribonuclease 3 (1020 aa).

Residues 113–144 (QQRSRRFRSAKDASDAAAEEERLREEFEREGR) are disordered. Residues 121 to 144 (SAKDASDAAAEEERLREEFEREGR) show a composition bias toward basic and acidic residues. Residues 262 to 279 (ERCFLCGQMGHFASNCEG) form a CCHC-type zinc finger. Disordered regions lie at residues 411–440 (QHQRQAERVKRDKAGKATKRMDDEAPTVQP) and 452–483 (RLASAPTPSPFQSNDGRSAPHQKVRRLSPGSS). Residues 414-433 (RQAERVKRDKAGKATKRMDD) are compositionally biased toward basic and acidic residues. The stretch at 487–523 (AIVDVENSLESDERENKEELKTKLKELIREKSDAFNS) forms a coiled coil. The span at 831-844 (NNHGMHNNHGMHNN) shows a compositional bias: low complexity. Disordered stretches follow at residues 831 to 859 (NNHGMHNNHGMHNNQGRQNPPGSVSGRHL), 875 to 897 (TDRYQTPTDVPAPGYGYNPPQYV), and 911 to 1020 (PGAQ…RHRY). Low complexity-rich tracts occupy residues 911–923 (PGAQGYAQPAPYQ) and 960–972 (GNHQNQHQQQQWH). The span at 1000 to 1020 (RGRGRGSHHHHDQGGNPRHRY) shows a compositional bias: basic residues.

It belongs to the 5'-3' exonuclease family. XRN2/RAT1 subfamily. Expressed in roots, leaves, stems and flowers.

It is found in the nucleus. Functionally, possesses 5'-&gt;3' exoribonuclease activity. Acts as an endogenous post-transcriptional gene silencing (PTGS) suppressor. Degrades miRNA-derived loops, excised during miRNA maturation in the nucleus. Required for proper development. Involved in pre-rRNA processing. Involved with XRN2 in the 5'-end exonucleolytic processing of 5.8S and 25S rRNAs. Contributes with XRN2 to polyadenylation-dependent nuclear RNA surveillance. Involved in the degradation of aberrant polyadenylated pre-rRNA through 5'-end processing. This is 5'-3' exoribonuclease 3 from Arabidopsis thaliana (Mouse-ear cress).